The sequence spans 415 residues: Homoserine O-acetyltransferase (415 aa).

Positions 47-369 (NAVLVCHGLT…HGHDAFLVEP (323 aa)) constitute an AB hydrolase-1 domain. Ser155 acts as the Nucleophile in catalysis. Position 226 (Arg226) interacts with substrate. Active-site residues include Asp329 and His362. Asp363 contacts substrate. The disordered stretch occupies residues 387-415 (RAVTDTATDGGEPDEEKDFAPVHSSLFSR).

The protein belongs to the AB hydrolase superfamily. MetX family. As to quaternary structure, homodimer.

It is found in the cytoplasm. The enzyme catalyses L-homoserine + acetyl-CoA = O-acetyl-L-homoserine + CoA. It participates in amino-acid biosynthesis; L-methionine biosynthesis via de novo pathway; O-acetyl-L-homoserine from L-homoserine: step 1/1. Transfers an acetyl group from acetyl-CoA to L-homoserine, forming acetyl-L-homoserine. The protein is Homoserine O-acetyltransferase of Haloferax gibbonsii (strain ATCC 33959 / DSM 4427 / JCM 8863 / NBRC 102184 / NCIMB 2188 / Ma 2.38).